The primary structure comprises 104 residues: Translation initiation factor 1A (104 aa).

A compositionally biased stretch (low complexity) spans Met1–Val14. Residues Met1–Asn20 are disordered. Positions Thr12–Thr87 constitute an S1-like domain.

The protein belongs to the eIF-1A family.

Seems to be required for maximal rate of protein biosynthesis. Enhances ribosome dissociation into subunits and stabilizes the binding of the initiator Met-tRNA(I) to 40 S ribosomal subunits. The polypeptide is Translation initiation factor 1A (eIF1A) (Methanococcus maripaludis (strain C6 / ATCC BAA-1332)).